We begin with the raw amino-acid sequence, 471 residues long: MAASASASALQAERCLLVGVGAGPRRHRLPLRMPPPLHAPPALLLLPHRRRRRWPPAVRASPGEGGGGGGGGGGGGGLAGALEKRPVMSALTVVVMNMRVLEIGVVAWSLATAIIPAVAGFMPGLVLSRILVGIGEGVSPSAATDLIARSIPVQERSRAVAVVFGGLSFGSVLGLLFAPPIIQNLGWESVFYIFGLLGIIWCLGFQSLKEQQLRGNEDIQVIQDLGQSPSGSSDLISSSVSPKSSESSLGELMNSLKDVPWREFFKSKAVWAMIYAHFCGSWGHYTCLSWLPTFFSEELDLNLTEAAWVSVLPPLGSMIITSIAAPFADNLISNGVDTTKVRKICQTIAFLSPATFMMLSSVDLGVPPWEIVAFLTSGLALSSFALSGLYCTHQDISREYASILLGITNTVGAVPGIVGVALTGYLLDTTHSWSISLFAPSIFFYLTGTAVWLAFASSEPQEFSKSEPESS.

The N-terminal 59 residues, 1-59 (MAASASASALQAERCLLVGVGAGPRRHRLPLRMPPPLHAPPALLLLPHRRRRRWPPAVR), are a transit peptide targeting the chloroplast. The disordered stretch occupies residues 56–76 (PAVRASPGEGGGGGGGGGGGG). The next 4 membrane-spanning stretches (helical) occupy residues 62–82 (PGEGGGGGGGGGGGGGLAGAL), 103–123 (IGVVAWSLATAIIPAVAGFMP), 162–182 (VVFGGLSFGSVLGLLFAPPII), and 185–205 (LGWESVFYIFGLLGIIWCLGF). Gly residues predominate over residues 63–76 (GEGGGGGGGGGGGG). The segment at 226–247 (GQSPSGSSDLISSSVSPKSSES) is disordered. A compositionally biased stretch (low complexity) spans 228-247 (SPSGSSDLISSSVSPKSSES). The next 6 membrane-spanning stretches (helical) occupy residues 270–290 (VWAMIYAHFCGSWGHYTCLSW), 307–327 (AWVSVLPPLGSMIITSIAAPF), 348–368 (IAFLSPATFMMLSSVDLGVPP), 371–391 (IVAFLTSGLALSSFALSGLYC), 403–423 (ILLGITNTVGAVPGIVGVALT), and 435–455 (ISLFAPSIFFYLTGTAVWLAF).

Belongs to the major facilitator superfamily. Sodium/anion cotransporter (TC 2.A.1.14) family.

The protein resides in the plastid. It localises to the chloroplast membrane. Probable anion transporter. The protein is Probable anion transporter 5, chloroplastic (PHT4;5) of Oryza sativa subsp. japonica (Rice).